We begin with the raw amino-acid sequence, 232 residues long: MFSNAFTEKAVMAELVAKMLWEIKAVHFRADEPYKLSSGMASPVYIDCRKLISYPRIRSAVMDFAAATILREAGFEQFDVVAGGETAGIPFAAMLAERLGLPMIYVRKAPKGHGRNAQIEGNMPEGARVLVIEDLTTAGGSMFKFIDAIRAAGGMVEHGIALFYYDIFPEARGDMKSKGVDLHFIATWRNVLSVARELALFDDKTLNEVEAFLDAPLAWSAKNGGVGALADR.

5-phospho-alpha-D-ribose 1-diphosphate is bound by residues arginine 107, lysine 108, lysine 111, histidine 113, and 133–141 (EDLTTAGGS). Threonine 137 serves as a coordination point for orotate.

Belongs to the purine/pyrimidine phosphoribosyltransferase family. PyrE subfamily. As to quaternary structure, homodimer. Requires Mg(2+) as cofactor.

It catalyses the reaction orotidine 5'-phosphate + diphosphate = orotate + 5-phospho-alpha-D-ribose 1-diphosphate. It functions in the pathway pyrimidine metabolism; UMP biosynthesis via de novo pathway; UMP from orotate: step 1/2. Functionally, catalyzes the transfer of a ribosyl phosphate group from 5-phosphoribose 1-diphosphate to orotate, leading to the formation of orotidine monophosphate (OMP). This Sinorhizobium medicae (strain WSM419) (Ensifer medicae) protein is Orotate phosphoribosyltransferase.